Consider the following 37-residue polypeptide: Large ribosomal subunit protein bL36 (37 aa).

The protein belongs to the bacterial ribosomal protein bL36 family.

The polypeptide is Large ribosomal subunit protein bL36 (Solibacter usitatus (strain Ellin6076)).